The sequence spans 329 residues: Porphobilinogen deaminase (329 aa).

Cys253 carries the S-(dipyrrolylmethanemethyl)cysteine modification.

The protein belongs to the HMBS family. Monomer. The cofactor is dipyrromethane.

The catalysed reaction is 4 porphobilinogen + H2O = hydroxymethylbilane + 4 NH4(+). Tetrapolymerization of the monopyrrole PBG into the hydroxymethylbilane pre-uroporphyrinogen in several discrete steps. This is Porphobilinogen deaminase from Leifsonia xyli subsp. xyli (strain CTCB07).